The chain runs to 281 residues: ATP synthase gamma chain (281 aa).

It belongs to the ATPase gamma chain family. As to quaternary structure, F-type ATPases have 2 components, CF(1) - the catalytic core - and CF(0) - the membrane proton channel. CF(1) has five subunits: alpha(3), beta(3), gamma(1), delta(1), epsilon(1). CF(0) has three main subunits: a, b and c.

The protein localises to the cell membrane. In terms of biological role, produces ATP from ADP in the presence of a proton gradient across the membrane. The gamma chain is believed to be important in regulating ATPase activity and the flow of protons through the CF(0) complex. The protein is ATP synthase gamma chain of Desulfitobacterium hafniense (strain DSM 10664 / DCB-2).